An 84-amino-acid polypeptide reads, in one-letter code: Large ribosomal subunit protein bL31B (84 aa).

It belongs to the bacterial ribosomal protein bL31 family. Type B subfamily. As to quaternary structure, part of the 50S ribosomal subunit.

In Rhodococcus erythropolis (strain PR4 / NBRC 100887), this protein is Large ribosomal subunit protein bL31B.